The sequence spans 615 residues: Dihydroxy-acid dehydratase (615 aa).

D81 contacts Mg(2+). C122 serves as a coordination point for [2Fe-2S] cluster. Mg(2+) is bound by residues D123 and K124. K124 carries the post-translational modification N6-carboxylysine. Residue C195 coordinates [2Fe-2S] cluster. E491 provides a ligand contact to Mg(2+). S517 functions as the Proton acceptor in the catalytic mechanism.

Belongs to the IlvD/Edd family. As to quaternary structure, homodimer. It depends on [2Fe-2S] cluster as a cofactor. The cofactor is Mg(2+).

The enzyme catalyses (2R)-2,3-dihydroxy-3-methylbutanoate = 3-methyl-2-oxobutanoate + H2O. It catalyses the reaction (2R,3R)-2,3-dihydroxy-3-methylpentanoate = (S)-3-methyl-2-oxopentanoate + H2O. The protein operates within amino-acid biosynthesis; L-isoleucine biosynthesis; L-isoleucine from 2-oxobutanoate: step 3/4. It functions in the pathway amino-acid biosynthesis; L-valine biosynthesis; L-valine from pyruvate: step 3/4. In terms of biological role, functions in the biosynthesis of branched-chain amino acids. Catalyzes the dehydration of (2R,3R)-2,3-dihydroxy-3-methylpentanoate (2,3-dihydroxy-3-methylvalerate) into 2-oxo-3-methylpentanoate (2-oxo-3-methylvalerate) and of (2R)-2,3-dihydroxy-3-methylbutanoate (2,3-dihydroxyisovalerate) into 2-oxo-3-methylbutanoate (2-oxoisovalerate), the penultimate precursor to L-isoleucine and L-valine, respectively. The chain is Dihydroxy-acid dehydratase from Shewanella pealeana (strain ATCC 700345 / ANG-SQ1).